The chain runs to 899 residues: MSDRIYHSYVNNFYQKAKSPKNTQLIKQIQRSNPTSPKKNLQIYKNINPFNHENCQRIIEENAIRFSDKKTVQLGTVYGCNILLTTKNSQPKVFEKLIQLSDNSNFRQVTLLKSISPVSVVKAKDFLNDSISNRSRSAQKMYSDKDKFQVGNNKSSLRSLIYFPLANIKDQISEESKSKRNKIKVIKDMPIQLDNSFQTINHQINSPNNNIVGDQSHVILHNIFKKRQQAEEGLQIQEEPQNYIKNKLELQERKMYLENQNPKSLSPIKIHFNEKSMPFKNKIQKKITYNEQSSIQQTITLIKKKILGPPSLYSRLKKNSEQFKNIENLIKNKAKESHEQNMQEYLKRIGCTDKNKKVFCINSQDQFVQEVLIELGWIENKLFKSDLFHLKWIYTDINKDYENLKEGQFYNHFQNNQELTNKGRLLRNIKLYLVSYPHLQKYFPIQFDVIYKQQKEEFLNEFQKFEIFRKFKDVIQIIKNDLTQELINQLTQIYHTKFIKKEEEEELQYGLITYFRQNQQFKQYIEYINQVNKDIINLLSKIPNPNINEMLIKYLNDLSILQVDKLECDQEQGDKNIQAQIINLSISIELDNILEQIYPYTNFCNFWIIKPCGSSKGQGLQIMSDDNQIVNYTTQLQARLVQKYIERIYICKSQEYPQLYNKKFDLRLWVLVKSFNPLTVYYYKHAYLRVCSSEYDLSDTRNIFSHFTNYSINRNKFIQNKNVEDSAISLKLLKHIIKKEHGISYQKKIQPQINEIIIHSLKSVQKKIKQNNSCFEIYGFDIIFDEQFNPYLLEVNLSPACSKRNEFISKLQKEMFISTLNILFNTEYYQIQNWKKIKIQDQIQKVINESTHTQLQEEVILNSNNFQSEDSEERFISAAITIQKWYRQIKLMKNENQKI.

In terms of domain architecture, TTL spans 471–835 (FKDVIQIIKN…TEYYQIQNWK (365 aa)). ATP-binding positions include 642–645 (QKYI), Lys-663, and Asp-665.

The protein resides in the cytoplasm. It is found in the cytoskeleton. Its subcellular location is the cilium basal body. In terms of biological role, probable glycylase which modifies tubulin, generating side chains of glycine on the gamma-carboxyl groups of specific glutamate residues within the C-terminal tail of tubulin. The chain is Tubulin glycylase 3F (TTLL3F) from Tetrahymena thermophila (strain SB210).